The sequence spans 103 residues: Co-chaperonin GroES (103 aa).

It belongs to the GroES chaperonin family. In terms of assembly, heptamer of 7 subunits arranged in a ring. Interacts with the chaperonin GroEL.

It localises to the cytoplasm. Together with the chaperonin GroEL, plays an essential role in assisting protein folding. The GroEL-GroES system forms a nano-cage that allows encapsulation of the non-native substrate proteins and provides a physical environment optimized to promote and accelerate protein folding. GroES binds to the apical surface of the GroEL ring, thereby capping the opening of the GroEL channel. This chain is Co-chaperonin GroES, found in Synechococcus sp. (strain WH7803).